The chain runs to 78 residues: Omega-conotoxin-like 2 (78 aa).

The signal sequence occupies residues 1–22 (MKLTCVVIVAVLLLTACQLITA). A propeptide spanning residues 23–42 (DDSRGTQKHRSLRSTTKVSK) is cleaved from the precursor. Disulfide bonds link C46/C62, C53/C65, and C61/C72.

Belongs to the conotoxin O1 superfamily. Expressed by the venom duct.

It localises to the secreted. Omega-conotoxins act at presynaptic membranes, they bind and block voltage-gated calcium channels (Cav). This is Omega-conotoxin-like 2 from Conus striatus (Striated cone).